The sequence spans 98 residues: Aspartyl/glutamyl-tRNA(Asn/Gln) amidotransferase subunit C (98 aa).

It belongs to the GatC family. As to quaternary structure, heterotrimer of A, B and C subunits.

It carries out the reaction L-glutamyl-tRNA(Gln) + L-glutamine + ATP + H2O = L-glutaminyl-tRNA(Gln) + L-glutamate + ADP + phosphate + H(+). The enzyme catalyses L-aspartyl-tRNA(Asn) + L-glutamine + ATP + H2O = L-asparaginyl-tRNA(Asn) + L-glutamate + ADP + phosphate + 2 H(+). In terms of biological role, allows the formation of correctly charged Asn-tRNA(Asn) or Gln-tRNA(Gln) through the transamidation of misacylated Asp-tRNA(Asn) or Glu-tRNA(Gln) in organisms which lack either or both of asparaginyl-tRNA or glutaminyl-tRNA synthetases. The reaction takes place in the presence of glutamine and ATP through an activated phospho-Asp-tRNA(Asn) or phospho-Glu-tRNA(Gln). The chain is Aspartyl/glutamyl-tRNA(Asn/Gln) amidotransferase subunit C from Roseiflexus castenholzii (strain DSM 13941 / HLO8).